We begin with the raw amino-acid sequence, 101 residues long: Large ribosomal subunit protein bL21 (101 aa).

Belongs to the bacterial ribosomal protein bL21 family. As to quaternary structure, part of the 50S ribosomal subunit. Contacts protein L20.

Its function is as follows. This protein binds to 23S rRNA in the presence of protein L20. This is Large ribosomal subunit protein bL21 from Beutenbergia cavernae (strain ATCC BAA-8 / DSM 12333 / CCUG 43141 / JCM 11478 / NBRC 16432 / NCIMB 13614 / HKI 0122).